Consider the following 288-residue polypeptide: Probable endonuclease 4 (288 aa).

Zn(2+) is bound by residues His-75, His-115, Glu-153, Asp-187, His-190, His-224, Asp-237, His-239, and Glu-269.

The protein belongs to the AP endonuclease 2 family. Requires Zn(2+) as cofactor.

It carries out the reaction Endonucleolytic cleavage to 5'-phosphooligonucleotide end-products.. In terms of biological role, endonuclease IV plays a role in DNA repair. It cleaves phosphodiester bonds at apurinic or apyrimidinic (AP) sites, generating a 3'-hydroxyl group and a 5'-terminal sugar phosphate. In Chlamydia muridarum (strain MoPn / Nigg), this protein is Probable endonuclease 4.